Here is a 560-residue protein sequence, read N- to C-terminus: Ubiquitin carboxyl-terminal hydrolase MINDY-3 homolog (560 aa).

A compositionally biased stretch (basic and acidic residues) spans Met-1–Glu-13. Disordered regions lie at residues Met-1–Ala-30 and Ser-44–Ala-91. Composition is skewed to low complexity over residues Ser-15–Ala-30 and Thr-52–Ser-81. Cys-139 functions as the Nucleophile in the catalytic mechanism. Residues Thr-203 to Glu-237 form a disordered region. Phosphoserine is present on residues Ser-212 and Ser-219. His-403 (proton acceptor) is an active-site residue.

Belongs to the MINDY deubiquitinase family. FAM188 subfamily.

The enzyme catalyses Thiol-dependent hydrolysis of ester, thioester, amide, peptide and isopeptide bonds formed by the C-terminal Gly of ubiquitin (a 76-residue protein attached to proteins as an intracellular targeting signal).. In terms of biological role, hydrolase that can remove 'Lys-48'-linked conjugated ubiquitin from proteins. The sequence is that of Ubiquitin carboxyl-terminal hydrolase MINDY-3 homolog (mindy3) from Drosophila melanogaster (Fruit fly).